The following is a 371-amino-acid chain: Histidinol-phosphate aminotransferase (371 aa).

Residue Lys-221 is modified to N6-(pyridoxal phosphate)lysine.

It belongs to the class-II pyridoxal-phosphate-dependent aminotransferase family. Histidinol-phosphate aminotransferase subfamily. Homodimer. Pyridoxal 5'-phosphate is required as a cofactor.

The enzyme catalyses L-histidinol phosphate + 2-oxoglutarate = 3-(imidazol-4-yl)-2-oxopropyl phosphate + L-glutamate. It functions in the pathway amino-acid biosynthesis; L-histidine biosynthesis; L-histidine from 5-phospho-alpha-D-ribose 1-diphosphate: step 7/9. This is Histidinol-phosphate aminotransferase from Pseudoalteromonas atlantica (strain T6c / ATCC BAA-1087).